We begin with the raw amino-acid sequence, 407 residues long: Peptidase T (407 aa).

Position 82 (His-82) interacts with Zn(2+). Asp-84 is a catalytic residue. Asp-143 provides a ligand contact to Zn(2+). Glu-177 (proton acceptor) is an active-site residue. Glu-178, Asp-200, and His-382 together coordinate Zn(2+).

This sequence belongs to the peptidase M20B family. Zn(2+) is required as a cofactor.

The protein localises to the cytoplasm. The enzyme catalyses Release of the N-terminal residue from a tripeptide.. Its function is as follows. Cleaves the N-terminal amino acid of tripeptides. In Streptococcus equi subsp. equi (strain 4047), this protein is Peptidase T.